The following is a 638-amino-acid chain: ABC transporter G family member 12 (638 aa).

The segment at 42 to 61 is disordered; it reads KQEKAKKKNDTESSTGDMNT. The ABC transporter domain maps to 58 to 301; sequence DMNTGVSTTI…SLGYPCPNNT (244 aa). ATP is bound at residue 91–98; sequence GPSGSGKS. An ABC transmembrane type-2 domain is found at 374-633; that stretch reads GNFVARVGTA…WTSYLALHFL (260 aa). A run of 7 helical transmembrane segments spans residues 376-396, 410-430, 459-479, 484-504, 516-536, 544-564, and 612-632; these read FVARVGTAVVTGLLFGVCFAG, TIFFLITGLNLTPFAVISLFL, TLIVFLVALINAAICYLFAHL, GHFFFAIMVYFFVHLLSDFMI, MTFAYGSGLSVIYMLFAGFYV, SFGWLHWVNPLFYSFVSLVVN, and FGVVVAWTVFFFWTSYLALHF.

Belongs to the ABC transporter superfamily. ABCG family. Eye pigment precursor importer (TC 3.A.1.204) subfamily.

It is found in the membrane. This chain is ABC transporter G family member 12 (abcG12), found in Dictyostelium discoideum (Social amoeba).